A 374-amino-acid chain; its full sequence is Ribonuclease D (374 aa).

The 166-residue stretch at 6-171 (IISTTEDLKK…RATRVILLSK (166 aa)) folds into the 3'-5' exonuclease domain. An HRDC domain is found at 213 to 292 (DRKSIGVAQE…ARALNKKEVD (80 aa)).

Belongs to the RNase D family. A divalent metal cation is required as a cofactor.

Its subcellular location is the cytoplasm. The enzyme catalyses Exonucleolytic cleavage that removes extra residues from the 3'-terminus of tRNA to produce 5'-mononucleotides.. In terms of biological role, exonuclease involved in the 3' processing of various precursor tRNAs. Initiates hydrolysis at the 3'-terminus of an RNA molecule and releases 5'-mononucleotides. In Desulfotalea psychrophila (strain LSv54 / DSM 12343), this protein is Ribonuclease D.